The sequence spans 310 residues: MPIKTQNDLPVKEILERENIFVMDENRASHQNIRQLEIAIVNLMPLKEDTELQILRSLSNTPIQVNVTFVTTSTHEATHTSLSHLNKFYETFDDIKDRYFDGMIITGAPVELMEYEEVDYWDEICSIMEWSKTHAFSTLHLCWGAQAGLYYHYGIPKRVLPKKKFGVYAHRVKNRKIPLVRGFDDVFYAPHSRHTEVLKEDILKHPELTILAESDDAGVFLLMDQDGKKIFVMGHPEYDRYTLHNEYERDKKKGLDIDMPVNYYPDNDDTQKPLLQWRSHGNILYSNWLNYYVYQEVPYEFINNREIIGK.

Cys-142 functions as the Acyl-thioester intermediate in the catalytic mechanism. 2 residues coordinate substrate: Lys-163 and Ser-192. The active-site Proton acceptor is His-235. Glu-237 is an active-site residue. Substrate is bound at residue Arg-249.

The protein belongs to the MetA family.

It is found in the cytoplasm. The catalysed reaction is L-homoserine + acetyl-CoA = O-acetyl-L-homoserine + CoA. It functions in the pathway amino-acid biosynthesis; L-methionine biosynthesis via de novo pathway; O-acetyl-L-homoserine from L-homoserine: step 1/1. Transfers an acetyl group from acetyl-CoA to L-homoserine, forming acetyl-L-homoserine. The chain is Homoserine O-acetyltransferase from Agathobacter rectalis (strain ATCC 33656 / DSM 3377 / JCM 17463 / KCTC 5835 / VPI 0990) (Eubacterium rectale).